The primary structure comprises 385 residues: DNA replication and repair protein RecF (385 aa).

30-37 serves as a coordination point for ATP; sequence GPNGNGKT.

The protein belongs to the RecF family.

Its subcellular location is the cytoplasm. In terms of biological role, the RecF protein is involved in DNA metabolism; it is required for DNA replication and normal SOS inducibility. RecF binds preferentially to single-stranded, linear DNA. It also seems to bind ATP. This Mycobacterium leprae (strain Br4923) protein is DNA replication and repair protein RecF.